Reading from the N-terminus, the 165-residue chain is Lipoprotein signal peptidase (165 aa).

A run of 3 helical transmembrane segments spans residues 9–29, 69–89, and 98–118; these read FLAI…VLLY, KYFL…FLFL, and IRFS…DIVF. Catalysis depends on residues aspartate 124 and aspartate 142. A helical membrane pass occupies residues 133–153; the sequence is WFFPTFNFADIFISLGTLIFI.

It belongs to the peptidase A8 family.

The protein localises to the cell inner membrane. It catalyses the reaction Release of signal peptides from bacterial membrane prolipoproteins. Hydrolyzes -Xaa-Yaa-Zaa-|-(S,diacylglyceryl)Cys-, in which Xaa is hydrophobic (preferably Leu), and Yaa (Ala or Ser) and Zaa (Gly or Ala) have small, neutral side chains.. It participates in protein modification; lipoprotein biosynthesis (signal peptide cleavage). Its function is as follows. This protein specifically catalyzes the removal of signal peptides from prolipoproteins. This chain is Lipoprotein signal peptidase, found in Chlamydia abortus (strain DSM 27085 / S26/3) (Chlamydophila abortus).